We begin with the raw amino-acid sequence, 205 residues long: GTP cyclohydrolase-2 (205 aa).

Residue 49–53 (RIHSE) participates in GTP binding. Zn(2+) is bound by residues Cys54, Cys65, and Cys67. GTP contacts are provided by residues Gln70, 92–94 (EGR), and Thr114. The active-site Proton acceptor is the Asp126. Arg128 (nucleophile) is an active-site residue. Positions 149 and 154 each coordinate GTP.

The protein belongs to the GTP cyclohydrolase II family. Zn(2+) serves as cofactor.

It carries out the reaction GTP + 4 H2O = 2,5-diamino-6-hydroxy-4-(5-phosphoribosylamino)-pyrimidine + formate + 2 phosphate + 3 H(+). It functions in the pathway cofactor biosynthesis; riboflavin biosynthesis; 5-amino-6-(D-ribitylamino)uracil from GTP: step 1/4. Its function is as follows. Catalyzes the conversion of GTP to 2,5-diamino-6-ribosylamino-4(3H)-pyrimidinone 5'-phosphate (DARP), formate and pyrophosphate. This chain is GTP cyclohydrolase-2, found in Shewanella woodyi (strain ATCC 51908 / MS32).